Here is a 207-residue protein sequence, read N- to C-terminus: Thymidylate kinase (207 aa).

7–14 (GCEGTGKT) lines the ATP pocket.

This sequence belongs to the thymidylate kinase family.

It carries out the reaction dTMP + ATP = dTDP + ADP. Phosphorylation of dTMP to form dTDP in both de novo and salvage pathways of dTTP synthesis. The polypeptide is Thymidylate kinase (Aster yellows witches'-broom phytoplasma (strain AYWB)).